Consider the following 245-residue polypeptide: 1-(5-phosphoribosyl)-5-[(5-phosphoribosylamino)methylideneamino] imidazole-4-carboxamide isomerase (245 aa).

The active-site Proton acceptor is the aspartate 7. Catalysis depends on aspartate 129, which acts as the Proton donor.

Belongs to the HisA/HisF family.

It localises to the cytoplasm. It carries out the reaction 1-(5-phospho-beta-D-ribosyl)-5-[(5-phospho-beta-D-ribosylamino)methylideneamino]imidazole-4-carboxamide = 5-[(5-phospho-1-deoxy-D-ribulos-1-ylimino)methylamino]-1-(5-phospho-beta-D-ribosyl)imidazole-4-carboxamide. Its pathway is amino-acid biosynthesis; L-histidine biosynthesis; L-histidine from 5-phospho-alpha-D-ribose 1-diphosphate: step 4/9. The polypeptide is 1-(5-phosphoribosyl)-5-[(5-phosphoribosylamino)methylideneamino] imidazole-4-carboxamide isomerase (Citrobacter koseri (strain ATCC BAA-895 / CDC 4225-83 / SGSC4696)).